A 628-amino-acid chain; its full sequence is uncharacterized protein (628 aa).

The protein belongs to the ATP-dependent AMP-binding enzyme family.

This is an uncharacterized protein from Pseudomonas aeruginosa (strain ATCC 15692 / DSM 22644 / CIP 104116 / JCM 14847 / LMG 12228 / 1C / PRS 101 / PAO1).